A 282-amino-acid chain; its full sequence is Shikimate dehydrogenase (NADP(+)) (282 aa).

Shikimate-binding positions include 24–26 and T71; that span reads SRS. K75 serves as the catalytic Proton acceptor. D87 contributes to the NADP(+) binding site. Shikimate is bound by residues N96 and D112. NADP(+) is bound by residues 138-142, 162-167, and L227; these read GAGGA and NRTRIR. Y229 provides a ligand contact to shikimate. G250 provides a ligand contact to NADP(+).

The protein belongs to the shikimate dehydrogenase family. As to quaternary structure, homodimer.

The enzyme catalyses shikimate + NADP(+) = 3-dehydroshikimate + NADPH + H(+). The protein operates within metabolic intermediate biosynthesis; chorismate biosynthesis; chorismate from D-erythrose 4-phosphate and phosphoenolpyruvate: step 4/7. Its function is as follows. Involved in the biosynthesis of the chorismate, which leads to the biosynthesis of aromatic amino acids. Catalyzes the reversible NADPH linked reduction of 3-dehydroshikimate (DHSA) to yield shikimate (SA). The sequence is that of Shikimate dehydrogenase (NADP(+)) from Paracoccus denitrificans (strain Pd 1222).